Consider the following 394-residue polypeptide: GTPase Era, mitochondrial (394 aa).

Residues 32-280 (KCLQLAVIGA…RDHLMSISPQ (249 aa)) enclose the Era-type G domain. A G1 region spans residues 40–47 (GAPNVGKS). 40–47 (GAPNVGKS) provides a ligand contact to GTP. A G2 region spans residues 66–70 (DTTTR). The tract at residues 87 to 90 (DSPG) is G3. Residues 87–91 (DSPGA) and 160–163 (NKID) each bind GTP. Residues 160 to 163 (NKID) are G4. A G5 region spans residues 259–261 (VSS).

The protein belongs to the TRAFAC class TrmE-Era-EngA-EngB-Septin-like GTPase superfamily. Era GTPase family.

The protein localises to the mitochondrion matrix. The protein resides in the mitochondrion inner membrane. Its function is as follows. Probable GTPase that plays a role in the mitochondrial ribosomal small subunit assembly. Specifically binds the 12S mitochondrial rRNA (12S mt-rRNA) to a 33 nucleotide section delineating the 3' terminal stem-loop region. May act as a chaperone that protects the 12S mt-rRNA on the 28S mitoribosomal subunit during ribosomal small subunit assembly. May play a role in positively regulating mitochondrial function. Plays a role in fertility. In Caenorhabditis elegans, this protein is GTPase Era, mitochondrial.